The sequence spans 152 residues: Ribosomal RNA large subunit methyltransferase H (152 aa).

S-adenosyl-L-methionine-binding positions include Leu-68, Gly-100, and 119 to 124 (FGRMTW).

Belongs to the RNA methyltransferase RlmH family. Homodimer.

The protein localises to the cytoplasm. It catalyses the reaction pseudouridine(1915) in 23S rRNA + S-adenosyl-L-methionine = N(3)-methylpseudouridine(1915) in 23S rRNA + S-adenosyl-L-homocysteine + H(+). Its function is as follows. Specifically methylates the pseudouridine at position 1915 (m3Psi1915) in 23S rRNA. The protein is Ribosomal RNA large subunit methyltransferase H of Paramagnetospirillum magneticum (strain ATCC 700264 / AMB-1) (Magnetospirillum magneticum).